Consider the following 267-residue polypeptide: MGQKINPIGFRVGVIRDWDAKWYADKKEYVPALQEDLRIRKYLETNLKDAAVDRITIERTEPTRINLTIHTAKPGIVIGRGGADVERLRSELSKIVDTYKGQHKRVNINIVEIRKPDLNAHLVGQQIAADLERRVAFRRAMRGAIQRVQRAGAKGVRTMVSGRLNGADIARKEQYTEGTVPLHTLRADIDYSWDEAMTSYGNLGIKTWIYRGDAENGQFIKDEDVAAAANNRGRGNNRGRGNSRQNGGRSRRPRQGQASTQGRGGNN.

The KH type-2 domain maps to Ile-39–Arg-114. The segment covering Ala-229–Gly-248 has biased composition (low complexity). A disordered region spans residues Ala-229 to Asn-267.

It belongs to the universal ribosomal protein uS3 family. Part of the 30S ribosomal subunit. Forms a tight complex with proteins S10 and S14.

Functionally, binds the lower part of the 30S subunit head. Binds mRNA in the 70S ribosome, positioning it for translation. This is Small ribosomal subunit protein uS3 from Oenococcus oeni (strain ATCC BAA-331 / PSU-1).